The primary structure comprises 590 residues: Aspartate--tRNA(Asp/Asn) ligase (590 aa).

Glutamate 172 contacts L-aspartate. Residues 196-199 (QLFK) form an aspartate region. Arginine 218 contacts L-aspartate. Residues 218–220 (RDE) and glutamine 227 each bind ATP. Histidine 449 contributes to the L-aspartate binding site. Glutamate 484 contacts ATP. Residue arginine 491 coordinates L-aspartate. 536–539 (GVDR) lines the ATP pocket.

This sequence belongs to the class-II aminoacyl-tRNA synthetase family. Type 1 subfamily. As to quaternary structure, homodimer.

The protein resides in the cytoplasm. It carries out the reaction tRNA(Asx) + L-aspartate + ATP = L-aspartyl-tRNA(Asx) + AMP + diphosphate. Functionally, aspartyl-tRNA synthetase with relaxed tRNA specificity since it is able to aspartylate not only its cognate tRNA(Asp) but also tRNA(Asn). Reaction proceeds in two steps: L-aspartate is first activated by ATP to form Asp-AMP and then transferred to the acceptor end of tRNA(Asp/Asn). The chain is Aspartate--tRNA(Asp/Asn) ligase from Francisella tularensis subsp. holarctica (strain FTNF002-00 / FTA).